A 363-amino-acid chain; its full sequence is MADTFKESPIKSVQVEALVVMKIAKHCSSSFPTIATGSIVGMDNDTLVEVTNSLNFPTVDVANVDSHQSERDASAQAAAAPRSKANLMYQAEMIKHLREVNVDANCVGWYTSATMGNFVTMSFIENQAHYQRENPKAIALVHDVSRSSQASLSLRAFRLSTAFMTALKENKFTTENLQKTKLTYKDILIEMPVVIHNSHLLTTYLHQIPSAPAAGSETTIPTSLAALQREPVNIPPYPSIDSLELSIDPFLEKTCDLLLDSIEAHYTDLNNHQYYQRQMTREQAKITAWQAKRKAENAARAAAKQEPLPDDEWKRLFKLPQEPSRLEGMLNARQVEQYSKQVDGFTANVSAKMFAVRGSLLTE.

One can recognise an MPN domain in the interval 13 to 163 (VQVEALVVMK…LRAFRLSTAF (151 aa)).

Belongs to the eIF-3 subunit H family. As to quaternary structure, component of the eukaryotic translation initiation factor 3 (eIF-3) complex.

Its subcellular location is the cytoplasm. In terms of biological role, component of the eukaryotic translation initiation factor 3 (eIF-3) complex, which is involved in protein synthesis of a specialized repertoire of mRNAs and, together with other initiation factors, stimulates binding of mRNA and methionyl-tRNAi to the 40S ribosome. The eIF-3 complex specifically targets and initiates translation of a subset of mRNAs involved in cell proliferation. In Pyricularia oryzae (strain 70-15 / ATCC MYA-4617 / FGSC 8958) (Rice blast fungus), this protein is Eukaryotic translation initiation factor 3 subunit H.